A 585-amino-acid chain; its full sequence is Pyruvate kinase (585 aa).

Arginine 32 contacts substrate. Asparagine 34, serine 36, aspartate 66, and threonine 67 together coordinate K(+). 34 to 37 (NFSH) is a binding site for ATP. Arginine 73 and lysine 156 together coordinate ATP. Mg(2+) is bound at residue glutamate 221. Residues glycine 244, aspartate 245, and threonine 277 each contribute to the substrate site. Residue aspartate 245 coordinates Mg(2+).

The protein belongs to the pyruvate kinase family. This sequence in the C-terminal section; belongs to the PEP-utilizing enzyme family. The cofactor is Mg(2+). K(+) is required as a cofactor.

The enzyme catalyses pyruvate + ATP = phosphoenolpyruvate + ADP + H(+). The protein operates within carbohydrate degradation; glycolysis; pyruvate from D-glyceraldehyde 3-phosphate: step 5/5. In Staphylococcus aureus (strain bovine RF122 / ET3-1), this protein is Pyruvate kinase (pyk).